Consider the following 1343-residue polypeptide: DNA-directed RNA polymerase subunit beta (1343 aa).

Belongs to the RNA polymerase beta chain family. In terms of assembly, the RNAP catalytic core consists of 2 alpha, 1 beta, 1 beta' and 1 omega subunit. When a sigma factor is associated with the core the holoenzyme is formed, which can initiate transcription.

It catalyses the reaction RNA(n) + a ribonucleoside 5'-triphosphate = RNA(n+1) + diphosphate. In terms of biological role, DNA-dependent RNA polymerase catalyzes the transcription of DNA into RNA using the four ribonucleoside triphosphates as substrates. This Shewanella piezotolerans (strain WP3 / JCM 13877) protein is DNA-directed RNA polymerase subunit beta.